The chain runs to 367 residues: Type II methyltransferase M.CviJI (367 aa).

Residues 3 to 367 (FRTLELFAGI…EYLGYLVQYD (365 aa)) form the SAM-dependent MTase C5-type domain. Residue C73 is part of the active site.

Belongs to the class I-like SAM-binding methyltransferase superfamily. C5-methyltransferase family.

It carries out the reaction a 2'-deoxycytidine in DNA + S-adenosyl-L-methionine = a 5-methyl-2'-deoxycytidine in DNA + S-adenosyl-L-homocysteine + H(+). A methylase that recognizes the double-stranded sequence 5'-RGCY-3', methylates C-3 on both strands, and protects the DNA from cleavage by the CviJI endonuclease. The sequence is that of Type II methyltransferase M.CviJI from Chlorella (PBCV-IL3A).